The primary structure comprises 384 residues: Probable zinc-binding alcohol dehydrogenase Rv1895 (384 aa).

The Zn(2+) site is built by Cys-38, His-59, Cys-89, Cys-92, Cys-95, and Cys-103.

It belongs to the zinc-containing alcohol dehydrogenase family. Zn(2+) serves as cofactor.

The enzyme catalyses a primary alcohol + NAD(+) = an aldehyde + NADH + H(+). It catalyses the reaction a secondary alcohol + NAD(+) = a ketone + NADH + H(+). This chain is Probable zinc-binding alcohol dehydrogenase Rv1895, found in Mycobacterium tuberculosis (strain ATCC 25618 / H37Rv).